The sequence spans 400 residues: 11-beta-hydroxysteroid dehydrogenase type 2 (400 aa).

An NAD(+)-binding site is contributed by 82-111 (TRAVLITGCDTGFGKETAKKLDAMGFTVLA). Residue serine 219 coordinates substrate. The active-site Proton acceptor is the tyrosine 232. The segment at 378-400 (PGQPGPVHDTTQDPNPSPTVSAL) is disordered. A compositionally biased stretch (polar residues) spans 389-400 (QDPNPSPTVSAL).

The protein belongs to the short-chain dehydrogenases/reductases (SDR) family. As to quaternary structure, interacts with ligand-free cytoplasmic NR3C2. Highly expressed in kidney, adrenal gland and distal colon, and at much lower levels in lung, hypothalamus, hippocampus, and midbrain.

Its subcellular location is the microsome. It is found in the endoplasmic reticulum. The enzyme catalyses an 11beta-hydroxysteroid + NAD(+) = an 11-oxosteroid + NADH + H(+). The catalysed reaction is corticosterone + NAD(+) = 11-dehydrocorticosterone + NADH + H(+). It catalyses the reaction 11beta,17beta-dihydroxyandrost-4-ene-3-one + NAD(+) = 17beta-hydroxyandrost-4-ene-3,11-dione + NADH + H(+). It carries out the reaction 11beta-hydroxyandrost-4-ene-3,17-dione + NAD(+) = androst-4-ene-3,11,17-trione + NADH + H(+). It functions in the pathway steroid metabolism. With respect to regulation, inhibited by glycyrrhetinic acid. Induced by progesterone, through the Ihh signaling pathway. Its function is as follows. Catalyzes the conversion of biologically active 11beta-hydroxyglucocorticoids (11beta-hydroxysteroid) such as corticosterone, to inactive 11-ketoglucocorticoids (11-oxosteroid) such as 11-dehydrocorticosterone, in the presence of NAD(+). Functions as a dehydrogenase (oxidase), thereby decreasing the concentration of active glucocorticoids, thus protecting the nonselective mineralocorticoid receptor from occupation by glucocorticoids. Plays an important role in maintaining glucocorticoids balance during preimplantation and protects the fetus from excessive maternal corticosterone exposure. Catalyzes the oxidation of 11beta-hydroxytestosterone (11beta,17beta-dihydroxyandrost-4-ene-3-one) to 11-ketotestosterone (17beta-hydroxyandrost-4-ene-3,11-dione), a major bioactive androgen. Catalyzes the conversion of 11beta-hydroxyandrostenedione (11beta-hydroxyandrost-4-ene-3,17-dione) to 11-ketoandrostenedione (androst-4-ene-3,11,17-trione), which can be further metabolized to 11-ketotestosterone. Converts 7-beta-25-dihydroxycholesterol to 7-oxo-25-hydroxycholesterol in vitro. 7-beta-25-dihydroxycholesterol (not 7-oxo-25-hydroxycholesterol) acts as a ligand for the G-protein-coupled receptor (GPCR) Epstein-Barr virus-induced gene 2 (EBI2) and may thereby regulate immune cell migration. The protein is 11-beta-hydroxysteroid dehydrogenase type 2 (Hsd11b2) of Rattus norvegicus (Rat).